The primary structure comprises 224 residues: uncharacterized protein (224 aa).

This is an uncharacterized protein from Saccharomyces cerevisiae (strain ATCC 204508 / S288c) (Baker's yeast).